Reading from the N-terminus, the 184-residue chain is MATVEVTPAVTALPENETADEVTKPQEPQPEAAVAAPPAPAEPVTEEPEKAAPEAVEAPEEPAATDAKDPAEVAEAEEEVVEEPQEVPEEPVAEAAAKEVEATEGKAEPTGEMKDKTPEATDAPEAPAAAEEPTDAPEAPAVAEEPTNAPEAPAVGEEPEAKEGKPDEAVEEASTEVPVDKTEE.

The tract at residues 1–184 (MATVEVTPAV…TEVPVDKTEE (184 aa)) is disordered. 2 stretches are compositionally biased toward low complexity: residues 25-36 (PQEPQPEAAVAA) and 53-65 (PEAV…PAAT). Residues 72–92 (EVAEAEEEVVEEPQEVPEEPV) show a composition bias toward acidic residues. The span at 96–119 (AAKEVEATEGKAEPTGEMKDKTPE) shows a compositional bias: basic and acidic residues. Over residues 120–156 (ATDAPEAPAAAEEPTDAPEAPAVAEEPTNAPEAPAVG) the composition is skewed to low complexity. Residues 159 to 168 (PEAKEGKPDE) show a composition bias toward basic and acidic residues.

This sequence to H.brasiliensis latex allergen Hev b 5.

This Actinidia deliciosa (Kiwi) protein is Fruit protein pKIWI501.